A 505-amino-acid chain; its full sequence is Monocarboxylate transporter 10 (505 aa).

Residues Met1 to Pro14 show a composition bias toward acidic residues. Residues Met1–Pro64 are disordered. Residues Met1–Glu66 lie on the Cytoplasmic side of the membrane. Positions Glu15–Glu31 are enriched in pro residues. Residues Pro32–Glu41 show a composition bias toward acidic residues. A helical membrane pass occupies residues Gly67–Ile87. The Extracellular portion of the chain corresponds to Gln88–Thr114. Residues Ala115–Phe135 form a helical membrane-spanning segment. The Cytoplasmic portion of the chain corresponds to Thr136–Arg142. A helical transmembrane segment spans residues Ile143–Thr163. Residues Ser164–Thr171 lie on the Extracellular side of the membrane. Residues Tyr172–Gly192 traverse the membrane as a helical segment. Over His193–Gly204 the chain is Cytoplasmic. Residues Ile205 to Leu225 form a helical membrane-spanning segment. Residues Lys226–Arg235 lie on the Extracellular side of the membrane. Residues Val236–Pro256 traverse the membrane as a helical segment. At Lys257 to Arg286 the chain is on the cytoplasmic side. The chain crosses the membrane as a helical span at residues Ile287 to Met307. The Extracellular segment spans residues Thr308–Glu321. Residues Val322–Ala342 form a helical membrane-spanning segment. Residue Asp343 is a topological domain, cytoplasmic. The helical transmembrane segment at Tyr344–Met364 threads the bilayer. Topologically, residues Ser365–Leu377 are extracellular. A helical membrane pass occupies residues Ile378–Phe400. The Cytoplasmic segment spans residues Glu401–Ala411. A helical membrane pass occupies residues Ile412–Phe432. The Extracellular portion of the chain corresponds to Leu433–Ala443. A helical transmembrane segment spans residues Phe444–Val464. At Glu465–Ile505 the chain is on the cytoplasmic side. The segment at Ala474–Ile505 is disordered. A compositionally biased stretch (basic and acidic residues) spans Thr494–Ile505.

Belongs to the major facilitator superfamily. Monocarboxylate porter (TC 2.A.1.13) family.

The protein localises to the cell membrane. It localises to the basolateral cell membrane. It carries out the reaction L-tryptophan(in) = L-tryptophan(out). The enzyme catalyses L-tyrosine(in) = L-tyrosine(out). It catalyses the reaction L-phenylalanine(in) = L-phenylalanine(out). The catalysed reaction is 3,3',5-triiodo-L-thyronine(out) = 3,3',5-triiodo-L-thyronine(in). It carries out the reaction L-thyroxine(out) = L-thyroxine(in). Sodium- and proton-independent thyroid hormones and aromatic acids transporter. Mediates both uptake and efflux of 3,5,3'-triiodothyronine (T3) and 3,5,3',5'-tetraiodothyronine (T4) with high affinity, suggesting a role in the homeostasis of thyroid hormone levels. Responsible for low affinity bidirectional transport of the aromatic amino acids, such as phenylalanine, tyrosine, tryptophan and L-3,4-dihydroxyphenylalanine (L-dopa). Plays an important role in homeostasis of aromatic amino acids. The chain is Monocarboxylate transporter 10 (slc16a10) from Danio rerio (Zebrafish).